Consider the following 262-residue polypeptide: MSARRRVTDFVKGKGPYVWVTAYDYPTAKIVDEAGVDGILVGDSLGMVVLGLPNTLGVTLADMIRHTQAVARARPRALVVADMPFMSYETGPRDALRNASKLIKAGADAVKLEGGAEYARIVEKLVKAGIPVMGHIGLNPQRVLALGGFKMVGRTEEQRRKLLDDAKALRDAGAFSLVIEFVPASVAKEITEAVDIPTICIGAGPHCDGQILVLHDIIGLTERPPSFAKRYANVADVIRSAVKQYVNEVKTGQFPSKEHFKE.

Residues Asp43 and Asp82 each contribute to the Mg(2+) site. Residues 43-44 (DS), Asp82, and Lys111 each bind 3-methyl-2-oxobutanoate. Residue Glu113 coordinates Mg(2+). Glu180 acts as the Proton acceptor in catalysis.

Belongs to the PanB family. In terms of assembly, homodecamer; pentamer of dimers. It depends on Mg(2+) as a cofactor.

It is found in the cytoplasm. The enzyme catalyses 3-methyl-2-oxobutanoate + (6R)-5,10-methylene-5,6,7,8-tetrahydrofolate + H2O = 2-dehydropantoate + (6S)-5,6,7,8-tetrahydrofolate. The protein operates within cofactor biosynthesis; coenzyme A biosynthesis. Catalyzes the reversible reaction in which hydroxymethyl group from 5,10-methylenetetrahydrofolate is transferred onto alpha-ketoisovalerate to form ketopantoate. The polypeptide is 3-methyl-2-oxobutanoate hydroxymethyltransferase (Pyrobaculum aerophilum (strain ATCC 51768 / DSM 7523 / JCM 9630 / CIP 104966 / NBRC 100827 / IM2)).